The following is a 132-amino-acid chain: Small ribosomal subunit protein uS8 (132 aa).

Belongs to the universal ribosomal protein uS8 family. In terms of assembly, part of the 30S ribosomal subunit. Contacts proteins S5 and S12.

Functionally, one of the primary rRNA binding proteins, it binds directly to 16S rRNA central domain where it helps coordinate assembly of the platform of the 30S subunit. This Nitrobacter hamburgensis (strain DSM 10229 / NCIMB 13809 / X14) protein is Small ribosomal subunit protein uS8.